We begin with the raw amino-acid sequence, 130 residues long: EG45-like domain containing protein 2 (130 aa).

A signal peptide spans 1–25 (MIKMAVKFVVVMIVFAQILAPIAEA). The region spanning 28-130 (GKAVYYDPPY…GNIRVVYTPI (103 aa)) is the Expansin-like EG45 domain. Asparagine 106 carries N-linked (GlcNAc...) asparagine glycosylation.

As to expression, expressed in unstressed leaves.

The protein localises to the secreted. Its function is as follows. Plays a systemic role in water and solute homeostasis. This chain is EG45-like domain containing protein 2 (EGC2), found in Arabidopsis thaliana (Mouse-ear cress).